The following is a 282-amino-acid chain: MRPPGCRDVPSARPALPLLLLLLSPLLLGALHGVGAGSGAPAELRVRVRLPDSQVIEESLQADSDADSISLDLRKPDGTLISFIADFKKDVKIFRALILGELEKGQSQFQALCFVTRLHHNDIIPSEAMAKLRQKNPRAVRQAEEVRGLEQLHMDIAVNFSQGGLLSPHLHNVCAEATDAIYTRQEDVQFWTERGVDSSVFEALPKALEQAELPRCGRVGDRGKPCTCHYSLSLAWYPCMLKYCHSRDRPAPYKCGIRSCRKSYTFDFYVPQKQLCLWDEDP.

The signal sequence occupies residues 1 to 29 (MRPPGCRDVPSARPALPLLLLLLSPLLLG).

The protein belongs to the OAF family.

The sequence is that of Out at first protein homolog (Oaf) from Mus musculus (Mouse).